A 985-amino-acid chain; its full sequence is Serine/threonine-protein kinase N2 (985 aa).

Positions 33–109 (KLDFSDTIVQ…LQELNAHIVV (77 aa)) constitute an REM-1 1 domain. K77 carries the post-translational modification N6-acetyllysine. S110 carries the phosphoserine modification. The interval 111 to 136 (DPEDYTDCPRTPDTPNSDSRSSTSNN) is disordered. Residues T121 and T124 each carry the phosphothreonine modification. Low complexity predominate over residues 121–136 (TPDTPNSDSRSSTSNN). REM-1 domains follow at residues 121–204 (TPDT…TNEL) and 207–286 (DNAK…ELPK). Phosphoserine is present on residues S303, S307, S361, and S363. Residues 352–383 (ATSVALPGWSPSENRSSFMSRTSKSKSGSSRN) form a disordered region. Residues 354-474 (SVALPGWSPS…LYLEPQGTLF (121 aa)) enclose the C2 domain. Positions 366–382 (RSSFMSRTSKSKSGSSR) are enriched in low complexity. The necessary to rescue apical junction formation stretch occupies residues 383–464 (NLLKTDDLSN…FLDNQRHGMA (82 aa)). Phosphoserine is present on residues S536, S584, S621, and S632. Residues 570-590 (DLEPEAPPAPPRASSLGEIDD) form a disordered region. Positions 658 to 917 (FRCCAVLGRG…AEDVKKHPFF (260 aa)) constitute a Protein kinase domain. Residues 664 to 672 (LGRGHFGKV) and K687 each bind ATP. D783 acts as the Proton acceptor in catalysis. T817 is subject to Phosphothreonine; by PDPK1. Residues 918–978 (RLTDWSALLD…EEEQEMFRDF (61 aa)) form a necessary for the catalytic activity region. The region spanning 918–985 (RLTDWSALLD…RDFDYVADWC (68 aa)) is the AGC-kinase C-terminal domain. A Phosphoserine modification is found at S953. T959 bears the Phosphothreonine mark. Positions 979 to 985 (DYVADWC) are negatively regulates the responsiveness of the catalytic activity by cardiolipin and is required for optimal activation by the GTP-bound RhoA.

The protein belongs to the protein kinase superfamily. AGC Ser/Thr protein kinase family. PKC subfamily. In terms of assembly, interacts (via the REM repeats) with RHOA (GTP-bound form preferentially) and interacts (via the REM repeats) with RAC1 (GTP-bound form preferentially); the interactions induce its autophosphorylation. Interacts with RHOC. Interacts with NCK1 (via SH3 domains) and NCK2. Interacts with CD44. Interacts (via C-terminal kinase domain) with PDPK1; the interaction stimulates PDPK1 kinase activity. Interacts with MAP3K2; the interaction activates PRK2 kinase activity in a MAP3K2-independent kinase activity. Interacts (via C-terminal domain) with AKT1; the interaction occurs with the C-terminal cleavage product of PRK2 in apoptotic cells. Interacts (via C-terminus) with PTPN13 (via PDZ 3 domain). Interacts with CDK10. Phosphorylated during mitosis. Autophosphorylated. Phosphorylated. Binding to Rho and Rac promotes autophosphorylation and phosphorylation on serine and threonine residues. Phosphorylated by CDK10. In terms of processing, proteolytically cleaved by caspase-3 during the induction of apoptotic cell death. Activated by limited proteolysis with trypsin. As to expression, expressed in liver (at protein level).

The protein resides in the cytoplasm. It localises to the nucleus. It is found in the membrane. The protein localises to the cell projection. Its subcellular location is the lamellipodium. The protein resides in the cytoskeleton. It localises to the cleavage furrow. It is found in the midbody. The protein localises to the cell junction. It carries out the reaction L-seryl-[protein] + ATP = O-phospho-L-seryl-[protein] + ADP + H(+). The enzyme catalyses L-threonyl-[protein] + ATP = O-phospho-L-threonyl-[protein] + ADP + H(+). Kinase activity is activated upon binding to GTP-bound Rho1/Rac1 GTPases. Activated by caspase-3 (CASP3) cleavage during apoptosis. Activated by lipids, particularly cardiolipin and to a lesser extent by other acidic phospholipids and unsaturated fatty acids. Two specific sites, Thr-817 (activation loop of the kinase domain) and Thr-959 (turn motif), need to be phosphorylated for its full activation. In terms of biological role, PKC-related serine/threonine-protein kinase and Rho/Rac effector protein that participates in specific signal transduction responses in the cell. Plays a role in the regulation of cell cycle progression, actin cytoskeleton assembly, cell migration, cell adhesion, tumor cell invasion and transcription activation signaling processes. Phosphorylates CTTN in hyaluronan-induced astrocytes and hence decreases CTTN ability to associate with filamentous actin. Phosphorylates HDAC5, therefore lead to impair HDAC5 import. Direct RhoA target required for the regulation of the maturation of primordial junctions into apical junction formation in bronchial epithelial cells. Required for G2/M phases of the cell cycle progression and abscission during cytokinesis in a ECT2-dependent manner. Stimulates FYN kinase activity that is required for establishment of skin cell-cell adhesion during keratinocytes differentiation. Regulates epithelial bladder cells speed and direction of movement during cell migration and tumor cell invasion. Inhibits Akt pro-survival-induced kinase activity. Mediates Rho protein-induced transcriptional activation via the c-fos serum response factor (SRF). Involved in the negative regulation of ciliogenesis. This Rattus norvegicus (Rat) protein is Serine/threonine-protein kinase N2 (Pkn2).